A 209-amino-acid chain; its full sequence is Uracil phosphoribosyltransferase (209 aa).

Residues R79, R104, and 131 to 139 (DPMLATGGS) contribute to the 5-phospho-alpha-D-ribose 1-diphosphate site. Residues I194 and 199 to 201 (GDA) each bind uracil. D200 contacts 5-phospho-alpha-D-ribose 1-diphosphate.

This sequence belongs to the UPRTase family. Mg(2+) is required as a cofactor.

It carries out the reaction UMP + diphosphate = 5-phospho-alpha-D-ribose 1-diphosphate + uracil. The protein operates within pyrimidine metabolism; UMP biosynthesis via salvage pathway; UMP from uracil: step 1/1. With respect to regulation, allosterically activated by GTP. Its function is as follows. Catalyzes the conversion of uracil and 5-phospho-alpha-D-ribose 1-diphosphate (PRPP) to UMP and diphosphate. In Streptococcus agalactiae serotype III (strain NEM316), this protein is Uracil phosphoribosyltransferase.